The sequence spans 204 residues: Inactive ribonuclease-like protein 9 (204 aa).

The first 26 residues, 1 to 26 (MMRTPITTHPLLLLLLLQQLLQPVQF), serve as a signal peptide directing secretion. Disulfide bonds link cysteine 97-cysteine 152, cysteine 115-cysteine 167, and cysteine 122-cysteine 129. Asparagine 130 and asparagine 142 each carry an N-linked (GlcNAc...) asparagine glycan.

The protein belongs to the pancreatic ribonuclease family.

The protein localises to the secreted. Its function is as follows. Does not exhibit any ribonuclease activity. This Macaca nemestrina (Pig-tailed macaque) protein is Inactive ribonuclease-like protein 9 (RNASE9).